We begin with the raw amino-acid sequence, 468 residues long: Malate-2H(+)/Na(+)-lactate antiporter (468 aa).

Transmembrane regions (helical) follow at residues 9–29 (LFEIIIVLGVFLALVLSFTVF), 30–50 (LDLPIQLALFVSWFIAMLLGI), 73–93 (AVLILVSVGALIGTWIAGGVV), 96–116 (LIYYGLEFIHPSIFLLATLII), 136–156 (IAMIAIGEGLGIPLPLVAGAI), 192–212 (LYLSIPAYVITAILFTVVGFM), 233–253 (TFDIHIWMLIPAVLVIVLLAM), 258–278 (MPVIVIGALLGAIWAVVFQGM), 309–329 (IVGMLDSLVVIIFGLGFGGLL), 357–377 (LIVAFLANIFGCAMYVSLILT), 405–425 (LTSGMVPWSDNGIYMAGILGV), and 428–448 (FSYLPFMWLSFVAIGLAIIYG).

Belongs to the NhaC Na(+)/H(+) (TC 2.A.35) antiporter family.

The protein localises to the cell membrane. Functionally, couples proton uptake and Na(+) efflux to the substrate-product malate/lactate antiport, in an electroneutral malate-2H(+)/Na(+)-lactate exchange. Plays a role in supporting growth to high density on malate at reduced protonmotive force. This chain is Malate-2H(+)/Na(+)-lactate antiporter (mleN), found in Bacillus subtilis (strain 168).